Consider the following 154-residue polypeptide: Interleukin-2 (154 aa).

An N-terminal signal peptide occupies residues 1–20; the sequence is MYKLQFLSCIALTLALVANS. An O-linked (GalNAc...) threonine glycan is attached at Thr23. An intrachain disulfide couples Cys78 to Cys126. Asn111 is a glycosylation site (N-linked (GlcNAc...) asparagine).

This sequence belongs to the IL-2 family.

The protein localises to the secreted. Functionally, cytokine produced by activated CD4-positive helper T-cells and to a lesser extend activated CD8-positive T-cells and natural killer (NK) cells that plays pivotal roles in the immune response and tolerance. Binds to a receptor complex composed of either the high-affinity trimeric IL-2R (IL2RA/CD25, IL2RB/CD122 and IL2RG/CD132) or the low-affinity dimeric IL-2R (IL2RB and IL2RG). Interaction with the receptor leads to oligomerization and conformation changes in the IL-2R subunits resulting in downstream signaling starting with phosphorylation of JAK1 and JAK3. In turn, JAK1 and JAK3 phosphorylate the receptor to form a docking site leading to the phosphorylation of several substrates including STAT5. This process leads to activation of several pathways including STAT, phosphoinositide-3-kinase/PI3K and mitogen-activated protein kinase/MAPK pathways. Functions as a T-cell growth factor and can increase NK-cell cytolytic activity as well. Promotes strong proliferation of activated B-cells and subsequently immunoglobulin production. Plays a pivotal role in regulating the adaptive immune system by controlling the survival and proliferation of regulatory T-cells, which are required for the maintenance of immune tolerance. Moreover, participates in the differentiation and homeostasis of effector T-cell subsets, including Th1, Th2, Th17 as well as memory CD8-positive T-cells. The sequence is that of Interleukin-2 (IL2) from Camelus bactrianus (Bactrian camel).